Reading from the N-terminus, the 212-residue chain is Thiamine-phosphate synthase (212 aa).

38–42 (QLREK) lines the 4-amino-2-methyl-5-(diphosphooxymethyl)pyrimidine pocket. Residues D71 and D90 each coordinate Mg(2+). K138 is a binding site for 4-amino-2-methyl-5-(diphosphooxymethyl)pyrimidine. G166 lines the 2-[(2R,5Z)-2-carboxy-4-methylthiazol-5(2H)-ylidene]ethyl phosphate pocket.

Belongs to the thiamine-phosphate synthase family. The cofactor is Mg(2+).

The catalysed reaction is 2-[(2R,5Z)-2-carboxy-4-methylthiazol-5(2H)-ylidene]ethyl phosphate + 4-amino-2-methyl-5-(diphosphooxymethyl)pyrimidine + 2 H(+) = thiamine phosphate + CO2 + diphosphate. It catalyses the reaction 2-(2-carboxy-4-methylthiazol-5-yl)ethyl phosphate + 4-amino-2-methyl-5-(diphosphooxymethyl)pyrimidine + 2 H(+) = thiamine phosphate + CO2 + diphosphate. It carries out the reaction 4-methyl-5-(2-phosphooxyethyl)-thiazole + 4-amino-2-methyl-5-(diphosphooxymethyl)pyrimidine + H(+) = thiamine phosphate + diphosphate. It functions in the pathway cofactor biosynthesis; thiamine diphosphate biosynthesis; thiamine phosphate from 4-amino-2-methyl-5-diphosphomethylpyrimidine and 4-methyl-5-(2-phosphoethyl)-thiazole: step 1/1. Functionally, condenses 4-methyl-5-(beta-hydroxyethyl)thiazole monophosphate (THZ-P) and 2-methyl-4-amino-5-hydroxymethyl pyrimidine pyrophosphate (HMP-PP) to form thiamine monophosphate (TMP). The chain is Thiamine-phosphate synthase from Chlamydia caviae (strain ATCC VR-813 / DSM 19441 / 03DC25 / GPIC) (Chlamydophila caviae).